Here is a 940-residue protein sequence, read N- to C-terminus: Isoleucine--tRNA ligase (940 aa).

A 'HIGH' region motif is present at residues 58-68 (PYANGDIHIGH). Position 564 (glutamate 564) interacts with L-isoleucyl-5'-AMP. Positions 605–609 (KMSKS) match the 'KMSKS' region motif. Lysine 608 lines the ATP pocket. Zn(2+)-binding residues include cysteine 903, cysteine 906, cysteine 923, and cysteine 926.

Belongs to the class-I aminoacyl-tRNA synthetase family. IleS type 1 subfamily. Monomer. Requires Zn(2+) as cofactor.

Its subcellular location is the cytoplasm. It catalyses the reaction tRNA(Ile) + L-isoleucine + ATP = L-isoleucyl-tRNA(Ile) + AMP + diphosphate. Functionally, catalyzes the attachment of isoleucine to tRNA(Ile). As IleRS can inadvertently accommodate and process structurally similar amino acids such as valine, to avoid such errors it has two additional distinct tRNA(Ile)-dependent editing activities. One activity is designated as 'pretransfer' editing and involves the hydrolysis of activated Val-AMP. The other activity is designated 'posttransfer' editing and involves deacylation of mischarged Val-tRNA(Ile). In Shewanella piezotolerans (strain WP3 / JCM 13877), this protein is Isoleucine--tRNA ligase.